We begin with the raw amino-acid sequence, 821 residues long: Fibroblast growth factor receptor 2 (821 aa).

The first 21 residues, 1 to 21, serve as a signal peptide directing secretion; it reads MVSWGRFICLVLVTMATLSLA. Residues 22 to 377 are Extracellular-facing; the sequence is RPSFSLVEDT…EITASPDYLE (356 aa). In terms of domain architecture, Ig-like C2-type 1 spans 25-125; sequence FSLVEDTTLE…ETWIFMVNVT (101 aa). C62 and C107 are disulfide-bonded. 2 N-linked (GlcNAc...) asparagine glycosylation sites follow: N83 and N123. Residues 129–151 are disordered; it reads SSGDDEDDTDSSEDVVSENRSNQ. The span at 131–144 shows a compositional bias: acidic residues; that stretch reads GDDEDDTDSSEDVV. N147 carries an N-linked (GlcNAc...) asparagine glycan. 2 consecutive Ig-like C2-type domains span residues 154-247 and 256-358; these read PYWT…YHLD and PILQ…AWLT. The segment at 161–178 is heparin-binding; that stretch reads KMEKRLHACPAANTVKFR. C179 and C231 are joined by a disulfide. 6 N-linked (GlcNAc...) asparagine glycosylation sites follow: N228, N241, N265, N297, N318, and N331. Residues C278 and C342 are joined by a disulfide bond. A helical membrane pass occupies residues 378–398; that stretch reads IAIYCIGVFLIACMVVTVIFC. The Cytoplasmic portion of the chain corresponds to 399–821; that stretch reads RMKTTTKKPD…YPHINGSVKT (423 aa). Y466 bears the Phosphotyrosine; by autocatalysis mark. A Protein kinase domain is found at 481 to 770; the sequence is LTLGKPLGEG…LTLTTNEEYL (290 aa). ATP-binding positions include 487 to 495, K517, 565 to 567, and N571; these read LGEGCFGQV and EYA. Residues Y586 and Y588 each carry the phosphotyrosine; by autocatalysis modification. The active-site Proton acceptor is D626. 3 positions are modified to phosphotyrosine; by autocatalysis: Y656, Y657, and Y769. S780 bears the Phosphoserine mark.

Belongs to the protein kinase superfamily. Tyr protein kinase family. Fibroblast growth factor receptor subfamily. Monomer. Homodimer after ligand binding. Interacts predominantly with FGF1 and FGF2, but can also interact with FGF3, FGF4, FGF6, FGF7, FGF8, FGF9, FGF10, FGF17, FGF18 and FGF22 (in vitro). Ligand specificity is determined by tissue-specific expression of isoforms, and differences in the third Ig-like domain are crucial for ligand specificity. Affinity for fibroblast growth factors (FGFs) is increased by heparan sulfate glycosaminoglycans that function as coreceptors. Likewise, KLB increases the affinity for FGF19 and FGF21. Interacts with PLCG1. Interacts with GRB2 and PAK4. Interacts with FLRT2. In terms of processing, autophosphorylated. Binding of FGF family members together with heparan sulfate proteoglycan or heparin promotes receptor dimerization and autophosphorylation on tyrosine residues. Autophosphorylation occurs in trans between the two FGFR molecules present in the dimer. Post-translationally, N-glycosylated in the endoplasmic reticulum. The N-glycan chains undergo further maturation to an Endo H-resistant form in the Golgi apparatus. Ubiquitinated. FGFR2 is rapidly ubiquitinated after autophosphorylation, leading to internalization and degradation. Subject to degradation both in lysosomes and by the proteasome.

It localises to the cell membrane. The protein localises to the golgi apparatus. The protein resides in the cytoplasmic vesicle. It catalyses the reaction L-tyrosyl-[protein] + ATP = O-phospho-L-tyrosyl-[protein] + ADP + H(+). With respect to regulation, present in an inactive conformation in the absence of bound ligand. Ligand binding leads to dimerization and activation by autophosphorylation on tyrosine residues. Functionally, tyrosine-protein kinase that acts as a cell-surface receptor for fibroblast growth factors and plays an essential role in the regulation of cell proliferation, differentiation, migration and apoptosis, and in the regulation of embryonic development. Required for normal embryonic patterning, trophoblast function, limb bud development, lung morphogenesis, osteogenesis and skin development. Plays an essential role in the regulation of osteoblast differentiation, proliferation and apoptosis, and is required for normal skeleton development. Promotes cell proliferation in keratinocytes and immature osteoblasts, but promotes apoptosis in differentiated osteoblasts. Phosphorylates PLCG1, FRS2 and PAK4. Ligand binding leads to the activation of several signaling cascades. Activation of PLCG1 leads to the production of the cellular signaling molecules diacylglycerol and inositol 1,4,5-trisphosphate. Phosphorylation of FRS2 triggers recruitment of GRB2, GAB1, PIK3R1 and SOS1, and mediates activation of RAS, MAPK1/ERK2, MAPK3/ERK1 and the MAP kinase signaling pathway, as well as of the AKT1 signaling pathway. FGFR2 signaling is down-regulated by ubiquitination, internalization and degradation. Mutations that lead to constitutive kinase activation or impair normal FGFR2 maturation, internalization and degradation lead to aberrant signaling. Over-expressed FGFR2 promotes activation of STAT1. This chain is Fibroblast growth factor receptor 2 (Fgfr2), found in Mus musculus (Mouse).